We begin with the raw amino-acid sequence, 287 residues long: Inorganic pyrophosphatase (287 aa).

Position 65 is a phosphothreonine (T65). Residue R79 participates in diphosphate binding. Y90 acts as the Proton donor in catalysis. Mg(2+) is bound by residues D116, D121, and D153. K239 participates in a covalent cross-link: Glycyl lysine isopeptide (Lys-Gly) (interchain with G-Cter in ubiquitin). Phosphothreonine is present on T251. At S266 the chain carries Phosphoserine. K279 participates in a covalent cross-link: Glycyl lysine isopeptide (Lys-Gly) (interchain with G-Cter in ubiquitin). S286 is subject to Phosphoserine.

The protein belongs to the PPase family. In terms of assembly, homodimer. The cofactor is Mg(2+).

It is found in the cytoplasm. The catalysed reaction is diphosphate + H2O = 2 phosphate + H(+). The chain is Inorganic pyrophosphatase (IPP1) from Saccharomyces cerevisiae (strain ATCC 204508 / S288c) (Baker's yeast).